We begin with the raw amino-acid sequence, 233 residues long: Ion-translocating oxidoreductase complex subunit E (233 aa).

6 helical membrane-spanning segments follow: residues 18 to 38, 39 to 59, 69 to 89, 92 to 112, 128 to 148, and 182 to 202; these read ALVQ…ATNA, LGLG…VSAL, IPIY…LINA, FGLY…CIVI, ALDG…LGAL, and PFLL…LLAG.

This sequence belongs to the NqrDE/RnfAE family. The complex is composed of six subunits: RnfA, RnfB, RnfC, RnfD, RnfE and RnfG.

The protein resides in the cell inner membrane. Part of a membrane-bound complex that couples electron transfer with translocation of ions across the membrane. The sequence is that of Ion-translocating oxidoreductase complex subunit E from Yersinia pseudotuberculosis serotype O:3 (strain YPIII).